The sequence spans 397 residues: Succinate--CoA ligase [ADP-forming] subunit beta (397 aa).

The region spanning 9 to 254 (KELLRGYGAP…TSEEDEKEIE (246 aa)) is the ATP-grasp domain. ATP contacts are provided by residues lysine 46, 53–55 (GRG), glutamate 109, alanine 112, and glutamate 117. Mg(2+) is bound by residues asparagine 209 and aspartate 223. Substrate-binding positions include asparagine 274 and 331-333 (GIM).

Belongs to the succinate/malate CoA ligase beta subunit family. In terms of assembly, heterotetramer of two alpha and two beta subunits. Requires Mg(2+) as cofactor.

The catalysed reaction is succinate + ATP + CoA = succinyl-CoA + ADP + phosphate. It catalyses the reaction GTP + succinate + CoA = succinyl-CoA + GDP + phosphate. It participates in carbohydrate metabolism; tricarboxylic acid cycle; succinate from succinyl-CoA (ligase route): step 1/1. Functionally, succinyl-CoA synthetase functions in the citric acid cycle (TCA), coupling the hydrolysis of succinyl-CoA to the synthesis of either ATP or GTP and thus represents the only step of substrate-level phosphorylation in the TCA. The beta subunit provides nucleotide specificity of the enzyme and binds the substrate succinate, while the binding sites for coenzyme A and phosphate are found in the alpha subunit. The chain is Succinate--CoA ligase [ADP-forming] subunit beta from Chelativorans sp. (strain BNC1).